A 973-amino-acid chain; its full sequence is Translation initiation factor IF-2 (973 aa).

A disordered region spans residues P52 to E388. Composition is skewed to basic and acidic residues over residues E83–K120, V128–R148, Q157–R172, V186–F202, P210–A246, R272–P288, L314–K333, and K343–R360. The span at A374–P386 shows a compositional bias: low complexity. The tr-type G domain occupies D472–K641. A G1 region spans residues G481–T488. Position 481–488 (G481–T488) interacts with GTP. The tract at residues G506–H510 is G2. The interval D527 to G530 is G3. Residues D527–H531 and N581–D584 each bind GTP. The G4 stretch occupies residues N581 to D584. The interval S617–L619 is G5.

It belongs to the TRAFAC class translation factor GTPase superfamily. Classic translation factor GTPase family. IF-2 subfamily.

It localises to the cytoplasm. Its function is as follows. One of the essential components for the initiation of protein synthesis. Protects formylmethionyl-tRNA from spontaneous hydrolysis and promotes its binding to the 30S ribosomal subunits. Also involved in the hydrolysis of GTP during the formation of the 70S ribosomal complex. The chain is Translation initiation factor IF-2 from Pelotomaculum thermopropionicum (strain DSM 13744 / JCM 10971 / SI).